Here is a 358-residue protein sequence, read N- to C-terminus: Biotin synthase (358 aa).

In terms of domain architecture, Radical SAM core spans 55–278 (NKVRIHILDN…VNPDSEIRIA (224 aa)). 3 residues coordinate [4Fe-4S] cluster: C70, C74, and C77. C114, C146, C206, and R276 together coordinate [2Fe-2S] cluster.

Belongs to the radical SAM superfamily. Biotin synthase family. Homodimer. The cofactor is [4Fe-4S] cluster. Requires [2Fe-2S] cluster as cofactor.

The enzyme catalyses (4R,5S)-dethiobiotin + (sulfur carrier)-SH + 2 reduced [2Fe-2S]-[ferredoxin] + 2 S-adenosyl-L-methionine = (sulfur carrier)-H + biotin + 2 5'-deoxyadenosine + 2 L-methionine + 2 oxidized [2Fe-2S]-[ferredoxin]. The protein operates within cofactor biosynthesis; biotin biosynthesis; biotin from 7,8-diaminononanoate: step 2/2. Its function is as follows. Catalyzes the conversion of dethiobiotin (DTB) to biotin by the insertion of a sulfur atom into dethiobiotin via a radical-based mechanism. In Leptospira borgpetersenii serovar Hardjo-bovis (strain JB197), this protein is Biotin synthase.